The sequence spans 468 residues: Replication factor C large subunit (468 aa).

Residue 50 to 57 coordinates ATP; the sequence is GPPGSGKT. Residues 422–456 are disordered; sequence EEKAVEEKVEEEEAEEEEEEERKEEEKPKAEKKKG. Acidic residues predominate over residues 429 to 444; the sequence is KVEEEEAEEEEEEERK.

The protein belongs to the activator 1 small subunits family. RfcL subfamily. As to quaternary structure, heteromultimer composed of small subunits (RfcS) and large subunits (RfcL).

Part of the RFC clamp loader complex which loads the PCNA sliding clamp onto DNA. The sequence is that of Replication factor C large subunit from Pyrococcus horikoshii (strain ATCC 700860 / DSM 12428 / JCM 9974 / NBRC 100139 / OT-3).